Reading from the N-terminus, the 525-residue chain is GMP synthase [glutamine-hydrolyzing] (525 aa).

Residues 3–200 enclose the Glutamine amidotransferase type-1 domain; it reads KILILDFGSQ…VLHVAGCKPS (198 aa). Residue C79 is the Nucleophile of the active site. Active-site residues include H174 and E176. The GMPS ATP-PPase domain maps to 201–393; it reads WTMPNYIDEA…LGLPHDMVYR (193 aa). Residue 228–234 participates in ATP binding; that stretch reads SGGVDSS.

Homodimer.

The enzyme catalyses XMP + L-glutamine + ATP + H2O = GMP + L-glutamate + AMP + diphosphate + 2 H(+). It functions in the pathway purine metabolism; GMP biosynthesis; GMP from XMP (L-Gln route): step 1/1. Its function is as follows. Catalyzes the synthesis of GMP from XMP. This is GMP synthase [glutamine-hydrolyzing] from Chromobacterium violaceum (strain ATCC 12472 / DSM 30191 / JCM 1249 / CCUG 213 / NBRC 12614 / NCIMB 9131 / NCTC 9757 / MK).